The sequence spans 235 residues: Large ribosomal subunit protein uL3 (235 aa).

It belongs to the universal ribosomal protein uL3 family. Part of the 50S ribosomal subunit. Forms a cluster with proteins L14 and L19.

Its function is as follows. One of the primary rRNA binding proteins, it binds directly near the 3'-end of the 23S rRNA, where it nucleates assembly of the 50S subunit. This is Large ribosomal subunit protein uL3 from Frankia casuarinae (strain DSM 45818 / CECT 9043 / HFP020203 / CcI3).